A 151-amino-acid polypeptide reads, in one-letter code: Large ribosomal subunit protein bL9 (151 aa).

Belongs to the bacterial ribosomal protein bL9 family.

Functionally, binds to the 23S rRNA. The polypeptide is Large ribosomal subunit protein bL9 (Rhodococcus opacus (strain B4)).